The chain runs to 577 residues: Arginine--tRNA ligase (577 aa).

Positions 122-132 match the 'HIGH' region motif; the sequence is PNVAKEMHVGH.

This sequence belongs to the class-I aminoacyl-tRNA synthetase family. In terms of assembly, monomer.

It is found in the cytoplasm. It carries out the reaction tRNA(Arg) + L-arginine + ATP = L-arginyl-tRNA(Arg) + AMP + diphosphate. The chain is Arginine--tRNA ligase from Escherichia coli (strain ATCC 8739 / DSM 1576 / NBRC 3972 / NCIMB 8545 / WDCM 00012 / Crooks).